Here is a 416-residue protein sequence, read N- to C-terminus: N-acetyl-L-cysteine deacetylase (416 aa).

5 residues coordinate Zn(2+): Cys-128, His-130, Glu-164, His-188, and His-380.

It belongs to the peptidase M20 family. It depends on Zn(2+) as a cofactor. Requires Co(2+) as cofactor.

The enzyme catalyses N-acetyl-L-cysteine + H2O = L-cysteine + acetate. The protein operates within amino-acid metabolism. Its function is as follows. Involved in a cysteine salvage pathway from S-alkylcysteine. Catalyzes the last step in this pathway, i.e. the deacetylation of N-acetyl-L-cysteine. This pathway is likely important in the catabolism of alkylated cysteine generated by proteolysis of alkylated glutathione formed in the detoxification of a wide range of electrophiles. The protein is N-acetyl-L-cysteine deacetylase of Bacillus subtilis (strain 168).